Here is a 261-residue protein sequence, read N- to C-terminus: DNA repair protein RecO (261 aa).

Belongs to the RecO family.

Its function is as follows. Involved in DNA repair and RecF pathway recombination. This chain is DNA repair protein RecO, found in Mycobacteroides abscessus (strain ATCC 19977 / DSM 44196 / CCUG 20993 / CIP 104536 / JCM 13569 / NCTC 13031 / TMC 1543 / L948) (Mycobacterium abscessus).